The following is a 574-amino-acid chain: Galectin-3-binding protein (574 aa).

The N-terminal stretch at Met-1–Gly-18 is a signal peptide. In terms of domain architecture, SRCR spans Met-24–Ser-124. 3 disulfides stabilise this stretch: Cys-49/Cys-113, Cys-62/Cys-123, and Cys-93/Cys-103. Residues Asn-69, Asn-96, Asn-102, and Asn-125 are each glycosylated (N-linked (GlcNAc...) asparagine). One can recognise a BTB domain in the interval Cys-153–Met-221. In terms of domain architecture, BACK spans Pro-260 to Gln-360. N-linked (GlcNAc...) asparagine glycosylation is found at Asn-362, Asn-398, Asn-540, and Asn-569.

In terms of assembly, homodimers and homomultimers. The multimers form ring-like structures with a diameter of 30-40 nm. Binds LGALS1 and LGALS3. Binds ITGB1, COL4A1, COL5A1, COL6A1, FN1 and NID. The unglycosylated form interacts with PDE4DIP; this interaction, which is PDE4DIP isoform-specific, may connect a pericentrosomal complex to the gamma-tubulin ring complex (gamma-TuRC) to promote microtubule assembly and acetylation. As to expression, detected in thyroid (at protein level).

The protein resides in the secreted. The protein localises to the extracellular space. It is found in the extracellular matrix. Promotes integrin-mediated cell adhesion. May stimulate host defense against viruses and tumor cells. The sequence is that of Galectin-3-binding protein (Lgals3bp) from Rattus norvegicus (Rat).